The sequence spans 298 residues: Tyrosine recombinase XerC (298 aa).

The Core-binding (CB) domain maps to 1–85; that stretch reads MQQQLDAYCA…AVRGLYHYLN (85 aa). The Tyr recombinase domain occupies 106 to 285; sequence RLPKTLDTDR…DFQHLAAVYD (180 aa). Residues arginine 146, lysine 170, histidine 237, arginine 240, and histidine 263 contribute to the active site. The active-site O-(3'-phospho-DNA)-tyrosine intermediate is tyrosine 272.

The protein belongs to the 'phage' integrase family. XerC subfamily. In terms of assembly, forms a cyclic heterotetrameric complex composed of two molecules of XerC and two molecules of XerD.

It is found in the cytoplasm. Functionally, site-specific tyrosine recombinase, which acts by catalyzing the cutting and rejoining of the recombining DNA molecules. The XerC-XerD complex is essential to convert dimers of the bacterial chromosome into monomers to permit their segregation at cell division. It also contributes to the segregational stability of plasmids. The protein is Tyrosine recombinase XerC of Pseudomonas fluorescens (strain ATCC BAA-477 / NRRL B-23932 / Pf-5).